Reading from the N-terminus, the 273-residue chain is NH(3)-dependent NAD(+) synthetase (273 aa).

47 to 54 (GISGGQDS) is an ATP binding site. D53 contacts Mg(2+). R139 is a deamido-NAD(+) binding site. ATP is bound at residue T159. E164 is a Mg(2+) binding site. Positions 172 and 179 each coordinate deamido-NAD(+). ATP-binding residues include K188 and T210. Position 259-260 (259-260 (HK)) interacts with deamido-NAD(+).

Belongs to the NAD synthetase family. In terms of assembly, homodimer.

It carries out the reaction deamido-NAD(+) + NH4(+) + ATP = AMP + diphosphate + NAD(+) + H(+). The protein operates within cofactor biosynthesis; NAD(+) biosynthesis; NAD(+) from deamido-NAD(+) (ammonia route): step 1/1. In terms of biological role, catalyzes the ATP-dependent amidation of deamido-NAD to form NAD. Uses ammonia as a nitrogen source. The chain is NH(3)-dependent NAD(+) synthetase from Staphylococcus saprophyticus subsp. saprophyticus (strain ATCC 15305 / DSM 20229 / NCIMB 8711 / NCTC 7292 / S-41).